The chain runs to 249 residues: Metal-staphylopine import system ATP-binding protein CntF (249 aa).

The region spanning 2–244 is the ABC transporter domain; that stretch reads IKIKDVEKSY…DNAYTRELIE (243 aa). 42-49 lines the ATP pocket; that stretch reads GESGSGKS.

It belongs to the ABC transporter superfamily. As to quaternary structure, the complex is composed of two ATP-binding proteins (CntD and CntF), two transmembrane proteins (CntB and CntC) and a solute-binding protein (CntA).

Its subcellular location is the cell membrane. With respect to regulation, nickel/cobalt import is reduced in the presence of zinc. Part of the ABC transporter complex CntABCDF (Opp1) involved in the uptake of metal in complex with the metallophore staphylopine (StP). Involved in the import of divalent metals ions such as nickel, cobalt and zinc. Probably responsible for energy coupling to the transport system. Plays a major role in nickel/cobalt import in zinc-depleted conditions. Contributes to virulence. Required for full urease activity in vitro. This Staphylococcus aureus (strain NCTC 8325 / PS 47) protein is Metal-staphylopine import system ATP-binding protein CntF.